Here is a 239-residue protein sequence, read N- to C-terminus: Ubiquinone biosynthesis O-methyltransferase (239 aa).

Positions 44, 63, 84, and 128 each coordinate S-adenosyl-L-methionine.

Belongs to the methyltransferase superfamily. UbiG/COQ3 family.

The enzyme catalyses a 3-demethylubiquinol + S-adenosyl-L-methionine = a ubiquinol + S-adenosyl-L-homocysteine + H(+). It carries out the reaction a 3-(all-trans-polyprenyl)benzene-1,2-diol + S-adenosyl-L-methionine = a 2-methoxy-6-(all-trans-polyprenyl)phenol + S-adenosyl-L-homocysteine + H(+). The protein operates within cofactor biosynthesis; ubiquinone biosynthesis. In terms of biological role, O-methyltransferase that catalyzes the 2 O-methylation steps in the ubiquinone biosynthetic pathway. The protein is Ubiquinone biosynthesis O-methyltransferase of Xanthomonas campestris pv. campestris (strain 8004).